We begin with the raw amino-acid sequence, 364 residues long: Aminomethyltransferase (364 aa).

The protein belongs to the GcvT family. In terms of assembly, the glycine cleavage system is composed of four proteins: P, T, L and H.

It carries out the reaction N(6)-[(R)-S(8)-aminomethyldihydrolipoyl]-L-lysyl-[protein] + (6S)-5,6,7,8-tetrahydrofolate = N(6)-[(R)-dihydrolipoyl]-L-lysyl-[protein] + (6R)-5,10-methylene-5,6,7,8-tetrahydrofolate + NH4(+). The glycine cleavage system catalyzes the degradation of glycine. The chain is Aminomethyltransferase from Shewanella pealeana (strain ATCC 700345 / ANG-SQ1).